Here is a 641-residue protein sequence, read N- to C-terminus: Chaperone protein DnaK (641 aa).

T200 carries the post-translational modification Phosphothreonine; by autocatalysis. Residues 606-623 (AEQGGNADAASGNAQASK) show a composition bias toward low complexity. Residues 606–628 (AEQGGNADAASGNAQASKAADDV) are disordered.

This sequence belongs to the heat shock protein 70 family.

Its function is as follows. Acts as a chaperone. This Xanthomonas axonopodis pv. citri (strain 306) protein is Chaperone protein DnaK.